The primary structure comprises 633 residues: Probable extracellular metalloproteinase 5 (633 aa).

The first 20 residues, 1 to 20, serve as a signal peptide directing secretion; that stretch reads MHGLLLAAAGLLSLPLHVLA. The propeptide occupies 21-244; the sequence is HPQPSTNLAG…VHNVVDYVSH (224 aa). Asn285 is a glycosylation site (N-linked (GlcNAc...) asparagine). His428 provides a ligand contact to Zn(2+). The active site involves Glu429. His432 serves as a coordination point for Zn(2+). N-linked (GlcNAc...) asparagine glycans are attached at residues Asn592 and Asn621.

This sequence belongs to the peptidase M36 family. Requires Zn(2+) as cofactor.

The protein resides in the secreted. Functionally, secreted metalloproteinase probably acting as a virulence factor. The protein is Probable extracellular metalloproteinase 5 (MEP5) of Arthroderma benhamiae (strain ATCC MYA-4681 / CBS 112371) (Trichophyton mentagrophytes).